Here is a 202-residue protein sequence, read N- to C-terminus: Probable pathogenesis-related protein CaO19.2336 (202 aa).

Residues 1-20 form the signal peptide; the sequence is MKTLLFIYLQLLLLLSIIIG. Residues asparagine 58 and asparagine 152 are each glycosylated (N-linked (GlcNAc...) asparagine). The SCP domain occupies 66-179; the sequence is LKEHNNKRKL…LNALYIVCSY (114 aa).

This sequence belongs to the CRISP family.

The protein localises to the secreted. Its function is as follows. Secreted protein that acts as a virulence factor during infections. In Candida albicans (strain SC5314 / ATCC MYA-2876) (Yeast), this protein is Probable pathogenesis-related protein CaO19.2336.